The following is a 658-amino-acid chain: MKLYCLSGHPTLPCNVLKFKSTTIMLDCGLDMTSTLNFLPLPLVQSPRLSKLPGLVLKDGSTFLDKELKECSGHVFVDSVPEFCLPETELLDLSTVDVILISNYHCMMALPYITEYTGFTGTVYATEPTVQIGRLLMEELVNSIERVPKAQSASTWKNKEVQRLLPAPLKDAVEVSMWRKCYTMPEVNAALSKIQLVGYSQKIELFGAVQVTPLSSGYALGSSNWIIQSHYEKVSYVSGSSLLTTHPQPMDQASLKNSDVLILTGLTQIPTANPDGMVGEFCSNLAMTVRNGGNVLVPCYPSGVIYDLLECLYQYIDSAGLSNVPFYFISPVANSSLEFSQIFAEWLCHNKQTKVYLPEPPFPHAELIQTNKLKHYPSIHGDFSNDFKQPCVIFTGHPSLRFGDVVHFMELWGKSSLNTVIFTEPDFSYLDALAPYQPLAMKCVYCPIDTRLNFIQVSKLLKEVQPLHVVCPEQYTQPPPSQSHRTDLMIDCQPPPMSYRRAEVLTLPYKRRYEKIEIMPELADSLVPLEIKPGISLATVSAMLHTKDNKHVLQLPPKPPQPPTSKKRKRVSDDVPECKPLKPLLSGSIPVDQFVQTLEKHGFSDVKVEDTAKGHIVLLQEAETLIQIEEDSTHIICDNDEPLRVKLRDLVLKFLQKF.

A disordered region spans residues K550–D574. The short motif at K566 to R570 is the Nuclear localization signal element.

This sequence belongs to the metallo-beta-lactamase superfamily. RNA-metabolizing metallo-beta-lactamase-like family. INTS9 subfamily. In terms of assembly, component of the Integrator complex, composed of core subunits INTS1, INTS2, INTS3, INTS4, INTS5, INTS6, INTS7, INTS8, INTS9/RC74, INTS10, INTS11/CPSF3L, INTS12, INTS13, INTS14 and INTS15. The core complex associates with protein phosphatase 2A subunits PPP2CA and PPP2R1A, to form the Integrator-PP2A (INTAC) complex. INTS9 is part of the RNA endonuclease subcomplex, composed of INTS4, INTS9, INTS11 and inositol hexakisphosphate (InsP6).

Its subcellular location is the nucleus. The protein localises to the cytoplasm. Its function is as follows. Component of the integrator complex, a multiprotein complex that terminates RNA polymerase II (Pol II) transcription in the promoter-proximal region of genes. The integrator complex provides a quality checkpoint during transcription elongation by driving premature transcription termination of transcripts that are unfavorably configured for transcriptional elongation: the complex terminates transcription by (1) catalyzing dephosphorylation of the C-terminal domain (CTD) of Pol II subunit POLR2A/RPB1 and SUPT5H/SPT5, (2) degrading the exiting nascent RNA transcript via endonuclease activity and (3) promoting the release of Pol II from bound DNA. The integrator complex is also involved in terminating the synthesis of non-coding Pol II transcripts, such as enhancer RNAs (eRNAs), small nuclear RNAs (snRNAs), telomerase RNAs and long non-coding RNAs (lncRNAs). In Gallus gallus (Chicken), this protein is Integrator complex subunit 9 (INTS9).